The following is a 428-amino-acid chain: Probable pectin lyase F (428 aa).

The N-terminal stretch at 1-20 (MVLLHPLLTAAALLGASARA) is a signal peptide. Residues Cys-83 and Cys-107 are joined by a disulfide bond. Residue Arg-257 is part of the active site. A glycan (N-linked (GlcNAc...) asparagine) is linked at Asn-276. An intrachain disulfide couples Cys-324 to Cys-332. Residues 383–428 (GSGGSGAASSSVSITPSPTSSAIPSSSATPSSSAYARRHYARHHHY) form a disordered region. The segment covering 389 to 417 (AASSSVSITPSPTSSAIPSSSATPSSSAY) has biased composition (low complexity). Basic residues predominate over residues 418–428 (ARRHYARHHHY).

Belongs to the polysaccharide lyase 1 family.

It is found in the secreted. The enzyme catalyses Eliminative cleavage of (1-&gt;4)-alpha-D-galacturonan methyl ester to give oligosaccharides with 4-deoxy-6-O-methyl-alpha-D-galact-4-enuronosyl groups at their non-reducing ends.. In terms of biological role, pectinolytic enzymes consist of four classes of enzymes: pectin lyase, polygalacturonase, pectin methylesterase and rhamnogalacturonase. Among pectinolytic enzymes, pectin lyase is the most important in depolymerization of pectin, since it cleaves internal glycosidic bonds of highly methylated pectins. The chain is Probable pectin lyase F (pelF) from Aspergillus oryzae (strain ATCC 42149 / RIB 40) (Yellow koji mold).